Here is a 707-residue protein sequence, read N- to C-terminus: Acyl-CoA ligase 891, peroxisomal (707 aa).

259–270 (INYTSGTTGPPK) contacts ATP. The fatty acid-binding stretch occupies residues 525–549 (DGWFRTGDVCTVDAQGRFIIIDRRK). The short motif at 705 to 707 (AKL) is the Peroxisome targeting signal element.

Belongs to the ATP-dependent AMP-binding enzyme family.

The protein resides in the peroxisome matrix. The catalysed reaction is (4E,8E)-10-(4-hydroxy-6-methoxy-7-methyl-3-oxo-1,3-dihydro-2-benzofuran-5-yl)-4,8-dimethyldeca-4,8-dienoate + ATP + CoA = (4E,8E)-10-(4-hydroxy-6-methoxy-7-methyl-3-oxo-1,3-dihydro-2-benzofuran-5-yl)-4,8-dimethyldeca-4,8-dienoyl-CoA + AMP + diphosphate. Its pathway is secondary metabolite biosynthesis; terpenoid biosynthesis. Acyl-CoA ligase involved in the biosynthesis of mycophenolic acid (MPA), the first isolated antibiotic natural product in the world obtained from a culture of Penicillium brevicompactum in 1893. The peroxisomal acyl-CoA ligase 891 converts the intermediate MFDHMP-3C into MFDHMP-3C-CoA which impairs its diffusion from the peroxisome. The first step of the pathway is the synthesis of 5-methylorsellinic acid (5MOA) by the cytosolic polyketide synthase mpaC. 5MOA is then converted to the phthalide compound 5,7-dihydroxy-4,6-dimethylphthalide (DHMP) by the endoplasmic reticulum-bound cytochrome P450 monooxygenase mpaDE. MpaDE first catalyzes hydroxylation of 5-MOA to 4,6-dihydroxy-2-(hydroxymethyl)-3-methylbenzoic acid (DHMB). MpaDE then acts as a lactone synthase that catalyzes the ring closure to convert DHMB into DHMP. The next step is the prenylation of DHMP by the Golgi apparatus-associated prenyltransferase mpaA to yield farnesyl-DHMP (FDHMP). The ER-bound oxygenase mpaB then mediates the oxidative cleavage the C19-C20 double bond in FDHMP to yield FDHMP-3C via a mycophenolic aldehyde intermediate. The O-methyltransferase mpaG catalyzes the methylation of FDHMP-3C to yield MFDHMP-3C. After the cytosolic methylation of FDHMP-3C, MFDHMP-3C enters into peroxisomes probably via free diffusion due to its low molecular weight. Upon a peroxisomal CoA ligation reaction, catalyzed by a beta-oxidation component enzyme acyl-CoA ligase ACL891, MFDHMP-3C-CoA would then be restricted to peroxisomes for the following beta-oxidation pathway steps. The peroxisomal beta-oxidation machinery than converts MFDHMP-3C-CoA into MPA_CoA, via a beta-oxidation chain-shortening process. Finally mpaH acts as a peroxisomal acyl-CoA hydrolase with high substrate specificity toward MPA-CoA to release the final product MPA. This Penicillium brevicompactum protein is Acyl-CoA ligase 891, peroxisomal.